A 128-amino-acid chain; its full sequence is Small ribosomal subunit protein eS8 (128 aa).

Belongs to the eukaryotic ribosomal protein eS8 family. Part of the 30S ribosomal subunit.

This Metallosphaera sedula (strain ATCC 51363 / DSM 5348 / JCM 9185 / NBRC 15509 / TH2) protein is Small ribosomal subunit protein eS8.